The sequence spans 250 residues: NH(3)-dependent NAD(+) synthetase (250 aa).

31–38 (GISGGIDS) provides a ligand contact to ATP. D37 contacts Mg(2+). R122 is a deamido-NAD(+) binding site. T142 contributes to the ATP binding site. E147 lines the Mg(2+) pocket. Positions 155 and 162 each coordinate deamido-NAD(+). Residues K171 and S193 each contribute to the ATP site. 239-240 (HK) contacts deamido-NAD(+).

It belongs to the NAD synthetase family. As to quaternary structure, homodimer.

The catalysed reaction is deamido-NAD(+) + NH4(+) + ATP = AMP + diphosphate + NAD(+) + H(+). It participates in cofactor biosynthesis; NAD(+) biosynthesis; NAD(+) from deamido-NAD(+) (ammonia route): step 1/1. Its function is as follows. Catalyzes the ATP-dependent amidation of deamido-NAD to form NAD. Uses ammonia as a nitrogen source. The sequence is that of NH(3)-dependent NAD(+) synthetase from Alkaliphilus oremlandii (strain OhILAs) (Clostridium oremlandii (strain OhILAs)).